A 574-amino-acid polypeptide reads, in one-letter code: Regulatory protein NPR4 (574 aa).

Residues 1 to 21 (MAATAIEPSSSISFTSSHLSN) are disordered. A compositionally biased stretch (low complexity) spans 9 to 20 (SSSISFTSSHLS). The residue at position 11 (Ser11) is a Phosphoserine. The 77-residue stretch at 54–130 (TDAEIIIEEE…IYTGRLKPFP (77 aa)) folds into the BTB domain. The C2HC NPR-type zinc-finger motif lies at 133–147 (VSTCVDSVCAHDSCK). 4 residues coordinate Zn(2+): Cys136, Cys141, His143, and Cys146. ANK repeat units follow at residues 252–280 (ERTGKVLKALDSDDVELVKLLLTESDITL), 281–311 (DQANGLHYAVAYSDPKVVTQVLDLDMADVNF), and 315–344 (RGYTVLHIAAMRREPTIIIPLIQKGANASD). The salicylic acid-binding core (SBC) stretch occupies residues 373–516 (EPSKYRLCID…MDQYMDEEIP (144 aa)). Arg419 is a binding site for salicylate. The segment at 521–574 (PEKGTVKERRQKRMRYNELKNDVKKAYSKDKVARSCLSSSSPASSLREALENPT) is disordered. A compositionally biased stretch (basic and acidic residues) spans 535–553 (RYNELKNDVKKAYSKDKVA). The span at 554–567 (RSCLSSSSPASSLR) shows a compositional bias: low complexity.

The protein belongs to the plant 'ANKYRIN-BTB/POZ' family. 'NPR1-like' subfamily. In terms of assembly, forms homodimers, homotetramers and heterodimers with NPR3 in the presence of salicylic acid (SA). Interacts with TGA2, TGA3, TGA5, TGA6 and TGA7. Interacts with CUL3A, a core component of the cullin-RING ubiquitin ligases (CRL). Binds to NPR1; this interaction is disrupted by association with SA, probably due to conformational changes.

It localises to the nucleus. The protein operates within protein modification; protein ubiquitination. Its function is as follows. Salicylic acid (SA)-binding substrate-specific adapter of an E3 ubiquitin-protein ligase complex (CUL3-RBX1-BTB) which mediates the ubiquitination and subsequent proteasomal degradation of NPR1 in the absence of SA. Together with NPR3, acts as receptor of salicylic acid to monitor immunity in a NPR1-dependent manner and induce systemic acquired resistance (SAR). Involved in the regulation of basal defense responses against pathogens, and may be implicated in the cross-talk between the SA- and JA-dependent signaling pathways. The polypeptide is Regulatory protein NPR4 (Arabidopsis thaliana (Mouse-ear cress)).